The primary structure comprises 526 residues: Bifunctional purine biosynthesis protein PurH (526 aa).

The 145-residue stretch at 1-145 (MSKAPLALLS…KNHAHVGIVT (145 aa)) folds into the MGS-like domain.

Belongs to the PurH family.

The catalysed reaction is (6R)-10-formyltetrahydrofolate + 5-amino-1-(5-phospho-beta-D-ribosyl)imidazole-4-carboxamide = 5-formamido-1-(5-phospho-D-ribosyl)imidazole-4-carboxamide + (6S)-5,6,7,8-tetrahydrofolate. It carries out the reaction IMP + H2O = 5-formamido-1-(5-phospho-D-ribosyl)imidazole-4-carboxamide. It participates in purine metabolism; IMP biosynthesis via de novo pathway; 5-formamido-1-(5-phospho-D-ribosyl)imidazole-4-carboxamide from 5-amino-1-(5-phospho-D-ribosyl)imidazole-4-carboxamide (10-formyl THF route): step 1/1. It functions in the pathway purine metabolism; IMP biosynthesis via de novo pathway; IMP from 5-formamido-1-(5-phospho-D-ribosyl)imidazole-4-carboxamide: step 1/1. The polypeptide is Bifunctional purine biosynthesis protein PurH (Psychrobacter arcticus (strain DSM 17307 / VKM B-2377 / 273-4)).